The chain runs to 291 residues: 33 kDa chaperonin (291 aa).

Intrachain disulfides connect Cys-237–Cys-239 and Cys-270–Cys-273.

The protein belongs to the HSP33 family. In terms of processing, under oxidizing conditions two disulfide bonds are formed involving the reactive cysteines. Under reducing conditions zinc is bound to the reactive cysteines and the protein is inactive.

It is found in the cytoplasm. Functionally, redox regulated molecular chaperone. Protects both thermally unfolding and oxidatively damaged proteins from irreversible aggregation. Plays an important role in the bacterial defense system toward oxidative stress. The sequence is that of 33 kDa chaperonin from Bacillus cereus (strain G9842).